The following is a 181-amino-acid chain: Oligoribonuclease (181 aa).

The Exonuclease domain maps to 8–171; it reads LIWIDLEMTG…DDIRESVAEL (164 aa). Residue Y129 is part of the active site.

It belongs to the oligoribonuclease family.

It is found in the cytoplasm. Its function is as follows. 3'-to-5' exoribonuclease specific for small oligoribonucleotides. In Yersinia pseudotuberculosis serotype O:1b (strain IP 31758), this protein is Oligoribonuclease.